A 262-amino-acid polypeptide reads, in one-letter code: Hydroxyethylthiazole kinase (262 aa).

M43 contacts substrate. The ATP site is built by R118 and T164. Substrate is bound at residue A191.

It belongs to the Thz kinase family. It depends on Mg(2+) as a cofactor.

The enzyme catalyses 5-(2-hydroxyethyl)-4-methylthiazole + ATP = 4-methyl-5-(2-phosphooxyethyl)-thiazole + ADP + H(+). It functions in the pathway cofactor biosynthesis; thiamine diphosphate biosynthesis; 4-methyl-5-(2-phosphoethyl)-thiazole from 5-(2-hydroxyethyl)-4-methylthiazole: step 1/1. Its function is as follows. Catalyzes the phosphorylation of the hydroxyl group of 4-methyl-5-beta-hydroxyethylthiazole (THZ). This is Hydroxyethylthiazole kinase from Cereibacter sphaeroides (strain ATCC 17025 / ATH 2.4.3) (Rhodobacter sphaeroides).